The primary structure comprises 1409 residues: DNA-directed RNA polymerase subunit beta' (1409 aa).

Cys70, Cys72, Cys85, and Cys88 together coordinate Zn(2+). Mg(2+) contacts are provided by Asp460, Asp462, and Asp464. Residues Cys814, Cys888, Cys895, and Cys898 each contribute to the Zn(2+) site.

This sequence belongs to the RNA polymerase beta' chain family. The RNAP catalytic core consists of 2 alpha, 1 beta, 1 beta' and 1 omega subunit. When a sigma factor is associated with the core the holoenzyme is formed, which can initiate transcription. The cofactor is Mg(2+). Zn(2+) serves as cofactor.

It catalyses the reaction RNA(n) + a ribonucleoside 5'-triphosphate = RNA(n+1) + diphosphate. Its function is as follows. DNA-dependent RNA polymerase catalyzes the transcription of DNA into RNA using the four ribonucleoside triphosphates as substrates. This Shewanella violacea protein is DNA-directed RNA polymerase subunit beta'.